The following is a 160-amino-acid chain: S-ribosylhomocysteine lyase (160 aa).

His57, His61, and Cys127 together coordinate Fe cation.

This sequence belongs to the LuxS family. In terms of assembly, homodimer. The cofactor is Fe cation.

The catalysed reaction is S-(5-deoxy-D-ribos-5-yl)-L-homocysteine = (S)-4,5-dihydroxypentane-2,3-dione + L-homocysteine. In terms of biological role, involved in the synthesis of autoinducer 2 (AI-2) which is secreted by bacteria and is used to communicate both the cell density and the metabolic potential of the environment. The regulation of gene expression in response to changes in cell density is called quorum sensing. Catalyzes the transformation of S-ribosylhomocysteine (RHC) to homocysteine (HC) and 4,5-dihydroxy-2,3-pentadione (DPD). The sequence is that of S-ribosylhomocysteine lyase from Streptococcus agalactiae serotype V (strain ATCC BAA-611 / 2603 V/R).